The chain runs to 187 residues: UPF0301 protein Clim_0777 (187 aa).

Belongs to the UPF0301 (AlgH) family.

The chain is UPF0301 protein Clim_0777 from Chlorobium limicola (strain DSM 245 / NBRC 103803 / 6330).